The chain runs to 92 residues: Small ribosomal subunit protein uS19 (92 aa).

The protein belongs to the universal ribosomal protein uS19 family.

In terms of biological role, protein S19 forms a complex with S13 that binds strongly to the 16S ribosomal RNA. The chain is Small ribosomal subunit protein uS19 from Rickettsia canadensis (strain McKiel).